Consider the following 494-residue polypeptide: 4-trimethylaminobutyraldehyde dehydrogenase (494 aa).

At serine 2 the chain carries N-acetylserine. Lysine 30 carries the post-translational modification N6-acetyllysine; alternate. Lysine 30 is modified (N6-succinyllysine; alternate). Lysine 59 is subject to N6-succinyllysine. NAD(+)-binding positions include lysine 180 and 232 to 236 (GSVPT). Glutamate 254 acts as the Proton acceptor in catalysis. Cysteine 288 acts as the Nucleophile in catalysis. N6-acetyllysine occurs at positions 298 and 344. Glutamate 391 contributes to the NAD(+) binding site.

Belongs to the aldehyde dehydrogenase family. Homotetramer.

It is found in the cytoplasm. The protein resides in the cytosol. It carries out the reaction 4-(trimethylamino)butanal + NAD(+) + H2O = 4-(trimethylamino)butanoate + NADH + 2 H(+). The enzyme catalyses an aldehyde + NAD(+) + H2O = a carboxylate + NADH + 2 H(+). It catalyses the reaction 4-aminobutanal + NAD(+) + H2O = 4-aminobutanoate + NADH + 2 H(+). The catalysed reaction is formaldehyde + NAD(+) + H2O = formate + NADH + 2 H(+). It carries out the reaction acetaldehyde + NAD(+) + H2O = acetate + NADH + 2 H(+). The enzyme catalyses imidazole-4-acetaldehyde + NAD(+) + H2O = imidazole-4-acetate + NADH + 2 H(+). It catalyses the reaction acrolein + NAD(+) + H2O = acrylate + NADH + 2 H(+). The catalysed reaction is (5-hydroxyindol-3-yl)acetaldehyde + NAD(+) + H2O = (5-hydroxyindol-3-yl)acetate + NADH + 2 H(+). It carries out the reaction 3,4-dihydroxyphenylacetaldehyde + NAD(+) + H2O = 3,4-dihydroxyphenylacetate + NADH + 2 H(+). The enzyme catalyses spermine monoaldehyde + NAD(+) + H2O = N-(2-carboxyethyl)spermidine + NADH + 2 H(+). It catalyses the reaction propanal + NAD(+) + H2O = propanoate + NADH + 2 H(+). The catalysed reaction is butanal + NAD(+) + H2O = butanoate + NADH + 2 H(+). It carries out the reaction pentanal + NAD(+) + H2O = pentanoate + NADH + 2 H(+). The enzyme catalyses hexanal + NAD(+) + H2O = hexanoate + NADH + 2 H(+). It functions in the pathway amine and polyamine biosynthesis; carnitine biosynthesis. Its function is as follows. Converts gamma-trimethylaminobutyraldehyde into gamma-butyrobetaine with high efficiency (in vitro). Can catalyze the irreversible oxidation of a broad range of aldehydes to the corresponding acids in an NAD-dependent reaction, but with low efficiency. Catalyzes the oxidation of aldehydes arising from biogenic amines and polyamines. The polypeptide is 4-trimethylaminobutyraldehyde dehydrogenase (ALDH9A1) (Bos taurus (Bovine)).